We begin with the raw amino-acid sequence, 74 residues long: Exodeoxyribonuclease 7 small subunit (74 aa).

The protein belongs to the XseB family. Heterooligomer composed of large and small subunits.

It is found in the cytoplasm. The enzyme catalyses Exonucleolytic cleavage in either 5'- to 3'- or 3'- to 5'-direction to yield nucleoside 5'-phosphates.. Functionally, bidirectionally degrades single-stranded DNA into large acid-insoluble oligonucleotides, which are then degraded further into small acid-soluble oligonucleotides. The chain is Exodeoxyribonuclease 7 small subunit from Thermotoga neapolitana (strain ATCC 49049 / DSM 4359 / NBRC 107923 / NS-E).